The following is a 299-amino-acid chain: MATH domain and coiled-coil domain-containing protein At2g42460 (299 aa).

The region spanning 7–130 (QKTFTWKIEN…NNTLFIEVYI (124 aa)) is the MATH domain. Residues 225–262 (FRVKWLKSKLDEISLARKKKVDADAARVQELEGKVKNQ) adopt a coiled-coil conformation.

In Arabidopsis thaliana (Mouse-ear cress), this protein is MATH domain and coiled-coil domain-containing protein At2g42460.